The chain runs to 183 residues: Adenine phosphoribosyltransferase (183 aa).

It belongs to the purine/pyrimidine phosphoribosyltransferase family. As to quaternary structure, homodimer.

The protein localises to the cytoplasm. The catalysed reaction is AMP + diphosphate = 5-phospho-alpha-D-ribose 1-diphosphate + adenine. It participates in purine metabolism; AMP biosynthesis via salvage pathway; AMP from adenine: step 1/1. Functionally, catalyzes a salvage reaction resulting in the formation of AMP, that is energically less costly than de novo synthesis. The polypeptide is Adenine phosphoribosyltransferase (Blochmanniella floridana).